The primary structure comprises 198 residues: Holliday junction branch migration complex subunit RuvA (198 aa).

Residues 1–64 form a domain I region; that stretch reads MYEYIKGEYM…EDFIGLYGFE (64 aa). Positions 65-143 are domain II; sequence SLEELDMFKL…SDELLNCIDE (79 aa). Residues 144–154 are flexible linker; it reads FDDVTQDNSLA. Positions 154-198 are domain III; sequence ALSEALSALISLGYTEKEAEKVLKDVDKSESVENIIKSALVKLMG.

It belongs to the RuvA family. As to quaternary structure, homotetramer. Forms an RuvA(8)-RuvB(12)-Holliday junction (HJ) complex. HJ DNA is sandwiched between 2 RuvA tetramers; dsDNA enters through RuvA and exits via RuvB. An RuvB hexamer assembles on each DNA strand where it exits the tetramer. Each RuvB hexamer is contacted by two RuvA subunits (via domain III) on 2 adjacent RuvB subunits; this complex drives branch migration. In the full resolvosome a probable DNA-RuvA(4)-RuvB(12)-RuvC(2) complex forms which resolves the HJ.

Its subcellular location is the cytoplasm. Its function is as follows. The RuvA-RuvB-RuvC complex processes Holliday junction (HJ) DNA during genetic recombination and DNA repair, while the RuvA-RuvB complex plays an important role in the rescue of blocked DNA replication forks via replication fork reversal (RFR). RuvA specifically binds to HJ cruciform DNA, conferring on it an open structure. The RuvB hexamer acts as an ATP-dependent pump, pulling dsDNA into and through the RuvAB complex. HJ branch migration allows RuvC to scan DNA until it finds its consensus sequence, where it cleaves and resolves the cruciform DNA. In Clostridium botulinum (strain Alaska E43 / Type E3), this protein is Holliday junction branch migration complex subunit RuvA.